Reading from the N-terminus, the 310-residue chain is NADP-dependent D-sorbitol-6-phosphate dehydrogenase (310 aa).

Y48 acts as the Proton donor in catalysis. Substrate is bound at residue H108. 210–272 lines the NADP(+) pocket; that stretch reads TPLGGAAANK…SSKIQRLKEN (63 aa).

It belongs to the aldo/keto reductase family.

The enzyme catalyses D-sorbitol 6-phosphate + NADP(+) = aldehydo-D-glucose 6-phosphate + NADPH + H(+). Synthesizes sorbitol-6-phosphate, a key intermediate in the synthesis of sorbitol which is a major photosynthetic product in many members of the Rosaceae family. In Malus domestica (Apple), this protein is NADP-dependent D-sorbitol-6-phosphate dehydrogenase (S6PDH).